Here is a 1305-residue protein sequence, read N- to C-terminus: Cyclin-G-associated kinase (1305 aa).

Residue Ser-2 is modified to N-acetylserine. Phosphoserine is present on residues Ser-2 and Ser-16. The Protein kinase domain occupies 40-315 (LRVRRVLAEG…IAEVVRQLQE (276 aa)). Asp-173 (proton acceptor) is an active-site residue. Positions 332 to 354 (LEQNGGYGNSGPSRAQPPSGGPV) are disordered. The region spanning 397 to 564 (SVANYAKGDL…EYVCDMVAEE (168 aa)) is the Phosphatase tensin-type domain. Ser-454 is modified (phosphoserine). Positions 570 to 708 (SKPMLVKSVV…FQVNLEVEVE (139 aa)) constitute a C2 tensin-type domain. The segment at 747-856 (FGKPELPRQP…TPRLAAGTRQ (110 aa)) is disordered. Position 768 is a phosphoserine (Ser-768). At Thr-774 the chain carries Phosphothreonine. Residues 776 to 789 (SDSPQSSSTDTNHF) are compositionally biased toward polar residues. Phosphoserine is present on Ser-781. Thr-792 is subject to Phosphothreonine. The span at 805–817 (VDNTSPKESQSNL) shows a compositional bias: polar residues. Phosphoserine occurs at positions 809, 824, and 827. A compositionally biased stretch (acidic residues) spans 822-832 (DGSEVSDEEEA). Over residues 836–848 (SEERKPGAGEDTP) the composition is skewed to basic and acidic residues. Ser-938 carries the phosphoserine modification. Residues 1044-1141 (LPGPASMPVP…PQAKPAPRAS (98 aa)) form a disordered region. A compositionally biased stretch (polar residues) spans 1105–1131 (VGTSATTHKSNSSWQTTRPTAPGTSWP). Arg-1122 bears the Omega-N-methylarginine mark. Residue Ser-1171 is modified to Phosphoserine. In terms of domain architecture, J spans 1241-1305 (SRWTPVSMAD…FENQGSRPLF (65 aa)).

The protein belongs to the protein kinase superfamily. Ser/Thr protein kinase family.

The protein localises to the cytoplasm. It localises to the perinuclear region. Its subcellular location is the golgi apparatus. It is found in the trans-Golgi network. The protein resides in the cell junction. The protein localises to the focal adhesion. It localises to the cytoplasmic vesicle. Its subcellular location is the clathrin-coated vesicle. It carries out the reaction L-seryl-[protein] + ATP = O-phospho-L-seryl-[protein] + ADP + H(+). The catalysed reaction is L-threonyl-[protein] + ATP = O-phospho-L-threonyl-[protein] + ADP + H(+). Its function is as follows. Associates with cyclin G and CDK5. Seems to act as an auxilin homolog that is involved in the uncoating of clathrin-coated vesicles by Hsc70 in non-neuronal cells. Expression oscillates slightly during the cell cycle, peaking at G1. May play a role in clathrin-mediated endocytosis and intracellular trafficking, and in the dynamics of clathrin assembly/disassembly. In Rattus norvegicus (Rat), this protein is Cyclin-G-associated kinase.